Consider the following 341-residue polypeptide: Glucokinase (341 aa).

18 to 23 (GDIGGT) is an ATP binding site.

It belongs to the bacterial glucokinase family.

The protein localises to the cytoplasm. The catalysed reaction is D-glucose + ATP = D-glucose 6-phosphate + ADP + H(+). The chain is Glucokinase from Rhizobium etli (strain CIAT 652).